A 122-amino-acid polypeptide reads, in one-letter code: Large ribosomal subunit protein uL14 (122 aa).

The protein belongs to the universal ribosomal protein uL14 family. In terms of assembly, part of the 50S ribosomal subunit. Forms a cluster with proteins L3 and L19. In the 70S ribosome, L14 and L19 interact and together make contacts with the 16S rRNA in bridges B5 and B8.

Functionally, binds to 23S rRNA. Forms part of two intersubunit bridges in the 70S ribosome. The sequence is that of Large ribosomal subunit protein uL14 from Wolinella succinogenes (strain ATCC 29543 / DSM 1740 / CCUG 13145 / JCM 31913 / LMG 7466 / NCTC 11488 / FDC 602W) (Vibrio succinogenes).